Consider the following 240-residue polypeptide: Adapter protein MecA (240 aa).

The segment covering 119–132 (QRKQQKKNHQDKQQ) has biased composition (basic and acidic residues). A disordered region spans residues 119–138 (QRKQQKKNHQDKQQRRAHKP).

Belongs to the MecA family. Homodimer.

Functionally, enables the recognition and targeting of unfolded and aggregated proteins to the ClpC protease or to other proteins involved in proteolysis. The polypeptide is Adapter protein MecA (Staphylococcus epidermidis (strain ATCC 35984 / DSM 28319 / BCRC 17069 / CCUG 31568 / BM 3577 / RP62A)).